The chain runs to 232 residues: Two-component response regulator ORR4 (232 aa).

The region spanning 11–147 (HVLAVDDSLI…DMKKLKSHLL (137 aa)) is the Response regulatory domain. 4-aspartylphosphate is present on Asp80. Disordered stretches follow at residues 153 to 174 (LPMA…AASA) and 202 to 232 (AAAM…AVET). A compositionally biased stretch (polar residues) spans 209–232 (VISSPDQRTKPRLSSTSSGLAVET).

The protein belongs to the ARR family. Type-A subfamily. In terms of processing, two-component system major event consists of a His-to-Asp phosphorelay between a sensor histidine kinase (HK) and a response regulator (RR). In plants, the His-to-Asp phosphorelay involves an additional intermediate named Histidine-containing phosphotransfer protein (HPt). This multistep phosphorelay consists of a His-Asp-His-Asp sequential transfer of a phosphate group between first a His and an Asp of the HK protein, followed by the transfer to a conserved His of the HPt protein and finally the transfer to an Asp in the receiver domain of the RR protein. In terms of tissue distribution, expressed in mature leaves and flowers, and at low levels in roots and shoots.

In terms of biological role, functions as a response regulator involved in His-to-Asp phosphorelay signal transduction system. Phosphorylation of the Asp residue in the receiver domain activates the ability of the protein to promote the transcription of target genes. Type-A response regulators seem to act as negative regulators of the cytokinin signaling. In Oryza sativa subsp. indica (Rice), this protein is Two-component response regulator ORR4.